The primary structure comprises 365 residues: tRNA(Met) cytidine acetate ligase (365 aa).

Residues 7–20 (IAEF…HKYL), Gly96, Asn152, and Arg175 contribute to the ATP site.

The protein belongs to the TmcAL family.

The protein resides in the cytoplasm. It catalyses the reaction cytidine(34) in elongator tRNA(Met) + acetate + ATP = N(4)-acetylcytidine(34) in elongator tRNA(Met) + AMP + diphosphate. Functionally, catalyzes the formation of N(4)-acetylcytidine (ac(4)C) at the wobble position of elongator tRNA(Met), using acetate and ATP as substrates. First activates an acetate ion to form acetyladenylate (Ac-AMP) and then transfers the acetyl group to tRNA to form ac(4)C34. In Streptococcus pneumoniae serotype 4 (strain ATCC BAA-334 / TIGR4), this protein is tRNA(Met) cytidine acetate ligase.